The chain runs to 244 residues: Probable metallo-hydrolase YhfI (244 aa).

Zn(2+) is bound by residues histidine 59, histidine 61, aspartate 63, histidine 64, histidine 134, aspartate 155, and histidine 211.

The protein belongs to the metallo-beta-lactamase superfamily. Zn(2+) serves as cofactor.

The sequence is that of Probable metallo-hydrolase YhfI (yhfI) from Bacillus subtilis (strain 168).